Here is a 487-residue protein sequence, read N- to C-terminus: MNKFARHFLPLSLRVRFLLATAGVVLVLSLAYGIVALVGYSVSFDKTTFRLLRGESNLFYTLAKWENNKISVELPENLDMQSPTMTLIYDETGKLLWTQRNIPWLIKSIQPEWLKTNGFHEIETNVDATSTLLSEDHSAQEKLKEVREDDDDAEMTHSVAVNIYPATTRMPQLTIVVVDTIPIELKRSYMVWSWFVYVLAANLLLVIPLLWIAAWWSLRPIEALAREVRELEDHHREMLNPETTRELTSLVRNLNQLLKSERERYNKYRTTLTDLTHSLKTPLAVLQSTLRSLRNEKMSVSKAEPVMLEQISRISQQIGYYLHRASMRGSGVLLSRELHPVAPLLDNLISALNKVYQRKGVNISMDISPEISFVGEQNDFVEVMGNVLDNACKYCLEFVEISARQTDDHLHIFVEDDGPGIPHSKRSLVFDRGQRADTLRPGQGVGLAVAREITEQYAGQIIASDSLLGGARMEVVFGRQHPTQKEE.

Residues 1–16 (MNKFARHFLPLSLRVR) are Cytoplasmic-facing. Residues 17–37 (FLLATAGVVLVLSLAYGIVAL) traverse the membrane as a helical segment. At 38–193 (VGYSVSFDKT…ELKRSYMVWS (156 aa)) the chain is on the periplasmic side. Asp-151 and Asp-152 together coordinate a divalent metal cation. The chain crosses the membrane as a helical span at residues 194–214 (WFVYVLAANLLLVIPLLWIAA). The region spanning 215–266 (WWSLRPIEALAREVRELEDHHREMLNPETTRELTSLVRNLNQLLKSERERYN) is the HAMP domain. Residues 215 to 487 (WWSLRPIEAL…GRQHPTQKEE (273 aa)) lie on the Cytoplasmic side of the membrane. Positions 274 to 481 (DLTHSLKTPL…RMEVVFGRQH (208 aa)) constitute a Histidine kinase domain. His-277 bears the Phosphohistidine; by autocatalysis mark. Position 386 (Asn-386) interacts with Mg(2+). Residues 386–394 (NVLDNACKY), 416–421 (DDGPGI), and 435–447 (RADT…GVGL) each bind ATP. Residue Gln-443 coordinates Mg(2+).

In terms of assembly, homodimer.

It localises to the cell inner membrane. The catalysed reaction is ATP + protein L-histidine = ADP + protein N-phospho-L-histidine.. Member of the two-component regulatory system PhoP/PhoQ which regulates the expression of genes involved in virulence and resistance to host defense antimicrobial peptides. In low periplasmic Mg(2+), PhoQ functions as a membrane-associated protein kinase that undergoes autophosphorylation and subsequently transfers the phosphate to PhoP, which results in the expression of PhoP-activated genes (PAG) and repression of PhoP-repressed genes (PRG). In high periplasmic Mg(2+), acts as a protein phosphatase that dephosphorylates phospho-PhoP, which results in the repression of PAG and may lead to expression of some PRG. Promotes intramacrophage survival of S.typhi. Is required to enhance bacterial resistance to bile in the human intestinal cells. This Salmonella typhi protein is Virulence sensor histidine kinase PhoQ (phoQ).